Consider the following 289-residue polypeptide: Ribosomal RNA small subunit methyltransferase A (289 aa).

Positions 21, 23, 48, 69, 94, and 120 each coordinate S-adenosyl-L-methionine.

Belongs to the class I-like SAM-binding methyltransferase superfamily. rRNA adenine N(6)-methyltransferase family. RsmA subfamily.

The protein resides in the cytoplasm. The catalysed reaction is adenosine(1518)/adenosine(1519) in 16S rRNA + 4 S-adenosyl-L-methionine = N(6)-dimethyladenosine(1518)/N(6)-dimethyladenosine(1519) in 16S rRNA + 4 S-adenosyl-L-homocysteine + 4 H(+). Its function is as follows. Specifically dimethylates two adjacent adenosines (A1518 and A1519) in the loop of a conserved hairpin near the 3'-end of 16S rRNA in the 30S particle. May play a critical role in biogenesis of 30S subunits. The polypeptide is Ribosomal RNA small subunit methyltransferase A (Actinobacillus pleuropneumoniae serotype 3 (strain JL03)).